We begin with the raw amino-acid sequence, 1169 residues long: RecBCD enzyme subunit RecB (1169 aa).

Residues 1–436 (MNKILEKIQN…IVLKINHRSS (436 aa)) enclose the UvrD-like helicase ATP-binding domain. The segment at 1–839 (MNKILEKIQN…LLEIAKIFTI (839 aa)) is DNA-binding and helicase activity, interacts with RecC. An ATP-binding site is contributed by 18–25 (ASAGTGKT). The UvrD-like helicase C-terminal domain maps to 459-746 (IEKIDFTNSL…ELMTIHKSKG (288 aa)). Residues 883–1169 (KEYTSSFSSL…ILELGIKRHL (287 aa)) are nuclease activity, interacts with RecD and RecA. Residues His939, Asp1052, and Asp1065 each contribute to the Mg(2+) site. The active-site For nuclease activity is Asp1065.

The protein belongs to the helicase family. UvrD subfamily. In terms of assembly, heterotrimer of RecB, RecC and RecD. All subunits contribute to DNA-binding. Interacts with RecA. Requires Mg(2+) as cofactor.

It catalyses the reaction Exonucleolytic cleavage (in the presence of ATP) in either 5'- to 3'- or 3'- to 5'-direction to yield 5'-phosphooligonucleotides.. The enzyme catalyses Couples ATP hydrolysis with the unwinding of duplex DNA by translocating in the 3'-5' direction.. It carries out the reaction ATP + H2O = ADP + phosphate + H(+). In terms of biological role, a helicase/nuclease that prepares dsDNA breaks (DSB) for recombinational DNA repair. Binds to DSBs and unwinds DNA via a highly rapid and processive ATP-dependent bidirectional helicase activity. Unwinds dsDNA until it encounters a Chi (crossover hotspot instigator) sequence from the 3' direction. Cuts ssDNA a few nucleotides 3' to the Chi site. The properties and activities of the enzyme are changed at Chi. The Chi-altered holoenzyme produces a long 3'-ssDNA overhang and facilitates RecA-binding to the ssDNA for homologous DNA recombination and repair. Holoenzyme degrades any linearized DNA that is unable to undergo homologous recombination. In the holoenzyme this subunit contributes ATPase, 3'-5' helicase, exonuclease activity and loads RecA onto ssDNA. This Borreliella burgdorferi (strain ATCC 35210 / DSM 4680 / CIP 102532 / B31) (Borrelia burgdorferi) protein is RecBCD enzyme subunit RecB.